A 320-amino-acid chain; its full sequence is Endolytic peptidoglycan transglycosylase RlpA (320 aa).

Belongs to the RlpA family.

Lytic transglycosylase with a strong preference for naked glycan strands that lack stem peptides. This is Endolytic peptidoglycan transglycosylase RlpA from Rickettsia prowazekii (strain Madrid E).